Reading from the N-terminus, the 264-residue chain is H-2 class II histocompatibility antigen, I-A beta chain (264 aa).

The signal sequence occupies residues M1–R31. The beta-1 stretch occupies residues P32–R121. The Extracellular segment spans residues P32–K225. Disulfide bonds link C42/C106 and C144/C200. The N-linked (GlcNAc...) asparagine glycan is linked to N46. The tract at residues V122 to W215 is beta-2. One can recognise an Ig-like C1-type domain in the interval P124 to E214. The interval K216 to K225 is connecting peptide. A helical transmembrane segment spans residues M226–F248. At R249 to S264 the chain is on the cytoplasmic side.

It belongs to the MHC class II family. In terms of processing, ubiquitinated in immature dendritic cells leading to down-regulation of MHC class II.

It localises to the membrane. In Mus musculus (Mouse), this protein is H-2 class II histocompatibility antigen, I-A beta chain (H2-Eb1).